We begin with the raw amino-acid sequence, 118 residues long: uncharacterized protein (118 aa).

The segment at 1–49 (MDYVGGSLKLKNVKKKPLKKKKKDSKKLAEKVQEHSSRDKSPLEENGVS) is disordered. Residues 11-25 (KNVKKKPLKKKKKDS) are compositionally biased toward basic residues. Over residues 26-43 (KKLAEKVQEHSSRDKSPL) the composition is skewed to basic and acidic residues.

This is an uncharacterized protein from Schizosaccharomyces pombe (strain 972 / ATCC 24843) (Fission yeast).